We begin with the raw amino-acid sequence, 125 residues long: Small ribosomal subunit protein eS8 (125 aa).

The disordered stretch occupies residues 1-36 (MKDQGRSTRKRTGGRLHDVSKKKRHQLGREPAETTV). A compositionally biased stretch (basic residues) spans 7–26 (STRKRTGGRLHDVSKKKRHQ). The segment covering 27–36 (LGREPAETTV) has biased composition (basic and acidic residues).

This sequence belongs to the eukaryotic ribosomal protein eS8 family. Part of the 30S ribosomal subunit.

The chain is Small ribosomal subunit protein eS8 from Haloquadratum walsbyi (strain DSM 16790 / HBSQ001).